The following is a 46-amino-acid chain: Esculentin-1A (46 aa).

C40 and C46 form a disulfide bridge.

It belongs to the frog skin active peptide (FSAP) family. Brevinin subfamily. Expressed by the skin glands.

It is found in the secreted. In terms of biological role, shows antibacterial activity against representative Gram-negative and Gram-positive bacterial species, and hemolytic activity. This chain is Esculentin-1A, found in Pelophylax lessonae (Pool frog).